The following is a 416-amino-acid chain: Hemagglutinin-esterase (416 aa).

Positions 1 to 14 (MLSLILFFPSFAFA) are cleaved as a signal peptide. An esterase domain first part region spans residues 4–121 (LILFFPSFAF…GVDGWIELKT (118 aa)). The Virion surface portion of the chain corresponds to 15-393 (ATPVTPYYGP…ENIDVISSSY (379 aa)). Residue serine 37 is the Nucleophile of the active site. The cysteines at positions 41 and 57 are disulfide-linked. A glycan (N-linked (GlcNAc...) asparagine; by host) is linked at asparagine 76. Cystine bridges form between cysteine 88/cysteine 136, cysteine 200/cysteine 246, and cysteine 206/cysteine 213. A receptor binding region spans residues 122–263 (RFYTKLYQMA…GTYNASTVGK (142 aa)). Asparagine 257 and asparagine 278 each carry an N-linked (GlcNAc...) asparagine; by host glycan. The esterase domain second part stretch occupies residues 264–379 (FLVYPTKSYC…SCPQFYKLFD (116 aa)). Cysteine 304 and cysteine 309 are disulfide-bonded. Asparagine 313 and asparagine 322 each carry an N-linked (GlcNAc...) asparagine; by host glycan. Catalysis depends on charge relay system residues aspartate 325 and histidine 328. Asparagine 343 carries N-linked (GlcNAc...) asparagine; by host glycosylation. A disulfide bridge connects residues cysteine 346 and cysteine 371. A helical membrane pass occupies residues 394–414 (FVATWVLLVVVVILIFVIISF). Residues 415–416 (FC) are Intravirion-facing.

This sequence belongs to the influenza type C/coronaviruses hemagglutinin-esterase family.

The protein localises to the virion membrane. It localises to the host cell membrane. It catalyses the reaction N-acetyl-9-O-acetylneuraminate + H2O = N-acetylneuraminate + acetate + H(+). It carries out the reaction N-acetyl-4-O-acetylneuraminate + H2O = N-acetylneuraminate + acetate + H(+). Its function is as follows. Structural protein that makes short spikes at the surface of the virus. Contains receptor binding and receptor-destroying activities. Mediates de-O-acetylation of N-acetyl-9-di-O-acetylneuraminic acid, which is probably the receptor determinant recognized by the virus on the surface of erythrocytes and susceptible cells. Also hydrolyzes 5-N-acetyl-4-O-acetylneuraminic acid and N-acetyl-9-O-acetylneuraminic acid, but displays a substrate preference for N-acetyl-9-di-O-acetylneuraminic acid. This receptor-destroying activity is important for virus release as it probably helps preventing self-aggregation and ensures the efficient spread of the progeny virus from cell to cell. May serve as a secondary viral attachment protein for initiating infection, the spike protein being the major one. Seems to be a 'luxury' protein that is not absolutely necessary for virus infection in culture. However, its presence in the virus may alter its pathogenicity. May become a target for both the humoral and the cellular branches of the immune system. The polypeptide is Hemagglutinin-esterase (HE) (Breda virus 1 (BRV-1)).